Reading from the N-terminus, the 323-residue chain is Elongation factor P--(R)-beta-lysine ligase (323 aa).

74–76 (SPE) contacts substrate. ATP contacts are provided by residues 98-100 (RNE) and asparagine 107. Tyrosine 116 contacts substrate. 242-243 (EL) is a binding site for ATP. Glutamate 249 is a binding site for substrate. Position 298 (glycine 298) interacts with ATP.

It belongs to the class-II aminoacyl-tRNA synthetase family. EpmA subfamily. In terms of assembly, homodimer.

The enzyme catalyses D-beta-lysine + L-lysyl-[protein] + ATP = N(6)-((3R)-3,6-diaminohexanoyl)-L-lysyl-[protein] + AMP + diphosphate + H(+). In terms of biological role, with EpmB is involved in the beta-lysylation step of the post-translational modification of translation elongation factor P (EF-P). Catalyzes the ATP-dependent activation of (R)-beta-lysine produced by EpmB, forming a lysyl-adenylate, from which the beta-lysyl moiety is then transferred to the epsilon-amino group of a conserved specific lysine residue in EF-P. The protein is Elongation factor P--(R)-beta-lysine ligase of Vibrio atlanticus (strain LGP32) (Vibrio splendidus (strain Mel32)).